Here is a 427-residue protein sequence, read N- to C-terminus: Enolase (427 aa).

Q163 provides a ligand contact to (2R)-2-phosphoglycerate. The active-site Proton donor is the E205. Residues D242, E285, and D312 each contribute to the Mg(2+) site. (2R)-2-phosphoglycerate contacts are provided by K337, R366, S367, and K388. The Proton acceptor role is filled by K337.

It belongs to the enolase family. It depends on Mg(2+) as a cofactor.

The protein resides in the cytoplasm. It localises to the secreted. It is found in the cell surface. It carries out the reaction (2R)-2-phosphoglycerate = phosphoenolpyruvate + H2O. It functions in the pathway carbohydrate degradation; glycolysis; pyruvate from D-glyceraldehyde 3-phosphate: step 4/5. In terms of biological role, catalyzes the reversible conversion of 2-phosphoglycerate (2-PG) into phosphoenolpyruvate (PEP). It is essential for the degradation of carbohydrates via glycolysis. This Burkholderia vietnamiensis (strain G4 / LMG 22486) (Burkholderia cepacia (strain R1808)) protein is Enolase.